The sequence spans 180 residues: Type IV major pilin protein PilE1 (180 aa).

Positions 1-7 (MNTLQKG) are excised as a propeptide. Phe-8 carries the post-translational modification N-methylphenylalanine. The chain crosses the membrane as a helical span at residues 8 to 28 (FTLIELMIVIAIVGILAAVAL). O-linked (GlcNAc...) serine glycosylation is present at Ser-70. Cys-128 and Cys-160 are disulfide-bonded.

This sequence belongs to the N-Me-Phe pilin family. In terms of assembly, the pili are polar flexible filaments of about 5.4 nanometers diameter and 2.5 micrometers average length; they consist of only a single polypeptide chain arranged in a helical configuration of five subunits per turn in the assembled pilus.

The protein resides in the fimbrium. Its subcellular location is the membrane. In terms of biological role, major component of the type IV pilus (T4P) that plays a role in cellular adherence, microcolony formation, resistance to neutrophil mediated killing, twitching motility as well as transformation. Mediates the attachment and the formation of bacterial microcolonies on host epithelial cells. Mechanistically, pili retractation induces host NF-kappa-B activation in infected cells, which is temporally associated with the formation of gonococcal microcolonies. In Neisseria gonorrhoeae, this protein is Type IV major pilin protein PilE1 (pilE1).